We begin with the raw amino-acid sequence, 202 residues long: Na(+)-translocating NADH-quinone reductase subunit E (202 aa).

The next 6 membrane-spanning stretches (helical) occupy residues 11-31, 39-59, 79-99, 114-134, 144-164, and 180-200; these read SIFL…FLAV, MGLG…NQLV, LSFL…QILE, GIFL…AFAV, IFYG…LAAV, and LGSV…FSGV.

The protein belongs to the NqrDE/RnfAE family. Composed of six subunits; NqrA, NqrB, NqrC, NqrD, NqrE and NqrF.

It localises to the cell inner membrane. The catalysed reaction is a ubiquinone + n Na(+)(in) + NADH + H(+) = a ubiquinol + n Na(+)(out) + NAD(+). NQR complex catalyzes the reduction of ubiquinone-1 to ubiquinol by two successive reactions, coupled with the transport of Na(+) ions from the cytoplasm to the periplasm. NqrA to NqrE are probably involved in the second step, the conversion of ubisemiquinone to ubiquinol. The protein is Na(+)-translocating NADH-quinone reductase subunit E of Pseudoalteromonas atlantica (strain T6c / ATCC BAA-1087).